We begin with the raw amino-acid sequence, 174 residues long: Large ribosomal subunit protein uL10 (174 aa).

This sequence belongs to the universal ribosomal protein uL10 family. Part of the ribosomal stalk of the 50S ribosomal subunit. The N-terminus interacts with L11 and the large rRNA to form the base of the stalk. The C-terminus forms an elongated spine to which L12 dimers bind in a sequential fashion forming a multimeric L10(L12)X complex.

Functionally, forms part of the ribosomal stalk, playing a central role in the interaction of the ribosome with GTP-bound translation factors. The polypeptide is Large ribosomal subunit protein uL10 (Anaeromyxobacter sp. (strain Fw109-5)).